Reading from the N-terminus, the 878-residue chain is Protein translocase subunit SecA (878 aa).

ATP-binding positions include Gln-79, Gly-97–Thr-101, and Asp-487.

It belongs to the SecA family.

The protein resides in the plastid. It localises to the chloroplast stroma. Its subcellular location is the chloroplast thylakoid membrane. The catalysed reaction is ATP + H2O + cellular proteinSide 1 = ADP + phosphate + cellular proteinSide 2.. Has a central role in coupling the hydrolysis of ATP to the transfer of proteins across the thylakoid membrane. The sequence is that of Protein translocase subunit SecA from Antithamnion sp. (Red alga).